Here is a 299-residue protein sequence, read N- to C-terminus: Tyrosine recombinase XerC (299 aa).

The 87-residue stretch at 2-88 folds into the Core-binding (CB) domain; sequence SALQPLIDTY…ALRSFLDYLV (87 aa). One can recognise a Tyr recombinase domain in the interval 109 to 289; it reads PLPKNVSVDD…DFQHLSKIYD (181 aa). Residues Arg148, Lys172, His241, Arg244, and His267 contribute to the active site. Catalysis depends on Tyr276, which acts as the O-(3'-phospho-DNA)-tyrosine intermediate.

The protein belongs to the 'phage' integrase family. XerC subfamily. In terms of assembly, forms a cyclic heterotetrameric complex composed of two molecules of XerC and two molecules of XerD.

It is found in the cytoplasm. In terms of biological role, site-specific tyrosine recombinase, which acts by catalyzing the cutting and rejoining of the recombining DNA molecules. The XerC-XerD complex is essential to convert dimers of the bacterial chromosome into monomers to permit their segregation at cell division. It also contributes to the segregational stability of plasmids. The sequence is that of Tyrosine recombinase XerC from Psychromonas ingrahamii (strain DSM 17664 / CCUG 51855 / 37).